The chain runs to 369 residues: Probable dual-specificity RNA methyltransferase RlmN (369 aa).

E108 acts as the Proton acceptor in catalysis. Residues 114-352 (YPDRATLCIS…CTVRDTKGQE (239 aa)) form the Radical SAM core domain. C121 and C357 form a disulfide bridge. [4Fe-4S] cluster is bound by residues C128, C132, and C135. S-adenosyl-L-methionine contacts are provided by residues 178–179 (GE), S212, 235–237 (SLH), and N314. Catalysis depends on C357, which acts as the S-methylcysteine intermediate.

Belongs to the radical SAM superfamily. RlmN family. [4Fe-4S] cluster serves as cofactor.

It is found in the cytoplasm. It catalyses the reaction adenosine(2503) in 23S rRNA + 2 reduced [2Fe-2S]-[ferredoxin] + 2 S-adenosyl-L-methionine = 2-methyladenosine(2503) in 23S rRNA + 5'-deoxyadenosine + L-methionine + 2 oxidized [2Fe-2S]-[ferredoxin] + S-adenosyl-L-homocysteine. The enzyme catalyses adenosine(37) in tRNA + 2 reduced [2Fe-2S]-[ferredoxin] + 2 S-adenosyl-L-methionine = 2-methyladenosine(37) in tRNA + 5'-deoxyadenosine + L-methionine + 2 oxidized [2Fe-2S]-[ferredoxin] + S-adenosyl-L-homocysteine. In terms of biological role, specifically methylates position 2 of adenine 2503 in 23S rRNA and position 2 of adenine 37 in tRNAs. This chain is Probable dual-specificity RNA methyltransferase RlmN, found in Corynebacterium efficiens (strain DSM 44549 / YS-314 / AJ 12310 / JCM 11189 / NBRC 100395).